Here is a 161-residue protein sequence, read N- to C-terminus: Nucleotide-binding protein Spea_3114 (161 aa).

It belongs to the YajQ family.

Functionally, nucleotide-binding protein. This chain is Nucleotide-binding protein Spea_3114, found in Shewanella pealeana (strain ATCC 700345 / ANG-SQ1).